The following is a 341-amino-acid chain: Basic membrane protein D (341 aa).

A signal peptide spans 1-16; it reads MLKKVYYFLIFLFIVA. The N-palmitoyl cysteine moiety is linked to residue Cys-17. Cys-17 is lipidated: S-diacylglycerol cysteine.

It belongs to the BMP lipoprotein family. Monomer.

It localises to the cell inner membrane. In terms of biological role, binds adenosine and inosine. May be part of an ABC-type nucleoside uptake system involved in the purine salvage pathway. This is Basic membrane protein D from Borreliella burgdorferi (strain JD1) (Borrelia burgdorferi).